The primary structure comprises 121 residues: Large ribosomal subunit protein eL18 (121 aa).

This sequence belongs to the eukaryotic ribosomal protein eL18 family. As to quaternary structure, part of the 50S ribosomal subunit.

The polypeptide is Large ribosomal subunit protein eL18 (Thermococcus kodakarensis (strain ATCC BAA-918 / JCM 12380 / KOD1) (Pyrococcus kodakaraensis (strain KOD1))).